The primary structure comprises 196 residues: GTP cyclohydrolase 1 (196 aa).

Zn(2+)-binding residues include Cys-86, His-89, and Cys-158.

Belongs to the GTP cyclohydrolase I family. In terms of assembly, toroid-shaped homodecamer, composed of two pentamers of five dimers.

It carries out the reaction GTP + H2O = 7,8-dihydroneopterin 3'-triphosphate + formate + H(+). It functions in the pathway cofactor biosynthesis; 7,8-dihydroneopterin triphosphate biosynthesis; 7,8-dihydroneopterin triphosphate from GTP: step 1/1. The protein is GTP cyclohydrolase 1 of Clostridium botulinum (strain ATCC 19397 / Type A).